Consider the following 66-residue polypeptide: Large ribosomal subunit protein bL35 (66 aa).

The protein belongs to the bacterial ribosomal protein bL35 family.

The protein is Large ribosomal subunit protein bL35 of Caulobacter sp. (strain K31).